The sequence spans 503 residues: Probable Xaa-Pro aminopeptidase TSTA_094700 (503 aa).

Mn(2+) is bound by residues aspartate 277, aspartate 288, glutamate 428, and glutamate 467.

The protein belongs to the peptidase M24B family. The cofactor is Mn(2+).

It carries out the reaction Release of any N-terminal amino acid, including proline, that is linked to proline, even from a dipeptide or tripeptide.. Catalyzes the removal of a penultimate prolyl residue from the N-termini of peptides. In Talaromyces stipitatus (strain ATCC 10500 / CBS 375.48 / QM 6759 / NRRL 1006) (Penicillium stipitatum), this protein is Probable Xaa-Pro aminopeptidase TSTA_094700.